Reading from the N-terminus, the 272-residue chain is Putative hydro-lyase BRADO2538 (272 aa).

This sequence belongs to the D-glutamate cyclase family.

This is Putative hydro-lyase BRADO2538 from Bradyrhizobium sp. (strain ORS 278).